A 154-amino-acid polypeptide reads, in one-letter code: Catabolic 3-dehydroquinase (154 aa).

Tyrosine 25 functions as the Proton acceptor in the catalytic mechanism. Residues asparagine 79, histidine 85, and aspartate 92 each coordinate substrate. Histidine 105 functions as the Proton donor in the catalytic mechanism. Substrate is bound by residues 106–107 (IS) and arginine 116.

It belongs to the type-II 3-dehydroquinase family. As to quaternary structure, homododecamer. Adopts a ring-like structure, composed of an arrangement of two hexameric rings stacked on top of one another.

The enzyme catalyses 3-dehydroquinate = 3-dehydroshikimate + H2O. It participates in aromatic compound metabolism; 3,4-dihydroxybenzoate biosynthesis; 3,4-dihydroxybenzoate from 3-dehydroquinate: step 1/2. Is involved in the catabolism of quinate. Allows the utilization of quinate as carbon source via the beta-ketoadipate pathway. The polypeptide is Catabolic 3-dehydroquinase (Botryotinia fuckeliana (strain B05.10) (Noble rot fungus)).